The following is a 151-amino-acid chain: MTTDLIDVRITRLPHSEGLPLPAYATAGAAGFDFLAAVDAPMTIAPGERVLVPTGLCIALPPAYELQVRPRSGLALKHGITLPNSPGTIDEDYRGELRIIVMNAGTEPFTVERGTRIAQGVLAPVSRLRWTEVETLDETARGEGGFGSTGH.

Residues 71-73, asparagine 84, and 88-90 each bind substrate; these read RSG and TID.

It belongs to the dUTPase family. It depends on Mg(2+) as a cofactor.

The catalysed reaction is dUTP + H2O = dUMP + diphosphate + H(+). The protein operates within pyrimidine metabolism; dUMP biosynthesis; dUMP from dCTP (dUTP route): step 2/2. In terms of biological role, this enzyme is involved in nucleotide metabolism: it produces dUMP, the immediate precursor of thymidine nucleotides and it decreases the intracellular concentration of dUTP so that uracil cannot be incorporated into DNA. The chain is Deoxyuridine 5'-triphosphate nucleotidohydrolase from Gluconobacter oxydans (strain 621H) (Gluconobacter suboxydans).